We begin with the raw amino-acid sequence, 557 residues long: Potassium-transporting ATPase potassium-binding subunit (557 aa).

10 helical membrane passes run 6–26 (IQLLIFLFALLIFSPLFGLGL), 59–79 (ALSLLVFNFFGFLLLFLILFF), 127–147 (AGLTTQNFLSATTGLCVLLAL), 172–192 (LYVLLPLSFIFALFLVGFGVV), 247–267 (ISNFLQMFSILILPGACVFLY), 278–298 (WAIFSVMFTILCVGILIVWTF), 363–383 (IVFGGVGAGMYGMILFVLLTV), 410–430 (ILGILLPSTIILLFTAISVSV), 475–495 (VMIAIAMILGRFGVILPVLVI), and 520–540 (FYILLLSVIIIVGALTFFPVL).

The protein belongs to the KdpA family. As to quaternary structure, the system is composed of three essential subunits: KdpA, KdpB and KdpC.

It is found in the cell inner membrane. Part of the high-affinity ATP-driven potassium transport (or Kdp) system, which catalyzes the hydrolysis of ATP coupled with the electrogenic transport of potassium into the cytoplasm. This subunit binds the periplasmic potassium ions and delivers the ions to the membrane domain of KdpB through an intramembrane tunnel. The polypeptide is Potassium-transporting ATPase potassium-binding subunit (Leptospira interrogans serogroup Icterohaemorrhagiae serovar copenhageni (strain Fiocruz L1-130)).